Here is a 948-residue protein sequence, read N- to C-terminus: Putative JmjC domain-containing histone demethylation protein 1 (948 aa).

The JmjC domain occupies 243–402 (VSTTKLAYYV…PQLSIYNLEL (160 aa)). Threonine 294 is a binding site for substrate. The Fe cation site is built by histidine 297 and glutamate 299. Residue lysine 314 participates in substrate binding.

Belongs to the JHDM1 histone demethylase family. Fe(2+) serves as cofactor.

It is found in the nucleus. It carries out the reaction N(6),N(6)-dimethyl-L-lysyl(36)-[histone H3] + 2 2-oxoglutarate + 2 O2 = L-lysyl(36)-[histone H3] + 2 formaldehyde + 2 succinate + 2 CO2. Functionally, may be a histone demethylase that specifically demethylates 'Lys-36' of histone H3, thereby playing a central role in histone code. Represses transcriptional silencing by negatively affecting heterochromatin stability. This Schizosaccharomyces pombe (strain 972 / ATCC 24843) (Fission yeast) protein is Putative JmjC domain-containing histone demethylation protein 1 (jhd1).